The following is a 265-amino-acid chain: Energy-coupling factor transporter transmembrane protein EcfT (265 aa).

5 consecutive transmembrane segments (helical) span residues 29–49 (IILFATLIFLANNTVTYAILI), 73–93 (VWILILFTVVLHIFITKGGTV), 110–130 (AIFISLRLGLLILISSLLTLT), 143–163 (LLGPLGKIGIPVHDIALMMSI), and 242–262 (FTWRDGIVAVVSVILVIVIGW).

Belongs to the energy-coupling factor EcfT family. Forms a stable energy-coupling factor (ECF) transporter complex composed of 2 membrane-embedded substrate-binding proteins (S component), 2 ATP-binding proteins (A component) and 2 transmembrane proteins (T component). May be able to interact with more than 1 S component at a time.

It is found in the cell membrane. Transmembrane (T) component of an energy-coupling factor (ECF) ABC-transporter complex. Unlike classic ABC transporters this ECF transporter provides the energy necessary to transport a number of different substrates. This is Energy-coupling factor transporter transmembrane protein EcfT from Brevibacillus brevis (strain 47 / JCM 6285 / NBRC 100599).